Reading from the N-terminus, the 687-residue chain is Glycine--tRNA ligase beta subunit (687 aa).

It belongs to the class-II aminoacyl-tRNA synthetase family. Tetramer of two alpha and two beta subunits.

Its subcellular location is the cytoplasm. The catalysed reaction is tRNA(Gly) + glycine + ATP = glycyl-tRNA(Gly) + AMP + diphosphate. The polypeptide is Glycine--tRNA ligase beta subunit (Ruegeria sp. (strain TM1040) (Silicibacter sp.)).